A 258-amino-acid chain; its full sequence is Leucine-rich repeat-containing protein 3B (258 aa).

Positions 1 to 33 (MTPLDLWLSRSIPMCLLLQSLVLMVLCFPSAST) are cleaved as a signal peptide. Residues 34 to 68 (CPKGCTCQRSESPPHGLNVTCSLSRLKEIPPDVPP) enclose the LRRNT domain. An N-linked (GlcNAc...) asparagine glycan is attached at N51. LRR repeat units lie at residues 69–90 (DTQLLQLDRNHISLVPDRIFHG), 93–114 (MLRRLNLSHNAVETLGEGAFIG), and 118–139 (SLEVLDLSYNRITSVHKDAFAR). N-linked (GlcNAc...) asparagine glycosylation occurs at N98. One can recognise an LRRCT domain in the interval 149–196 (NPWHCDCALQQALGGMAHNHERVLCRSSELRDQEGQPFMAVDADLCNL). Residues 204 to 224 (AMLVTMFGWFAMVISYVVYYV) form a helical membrane-spanning segment.

It belongs to the LRRC3 family.

The protein resides in the membrane. The sequence is that of Leucine-rich repeat-containing protein 3B (lrrc3b) from Danio rerio (Zebrafish).